Consider the following 340-residue polypeptide: Phosphoribosylformylglycinamidine cyclo-ligase (340 aa).

It belongs to the AIR synthase family.

It is found in the cytoplasm. The catalysed reaction is 2-formamido-N(1)-(5-O-phospho-beta-D-ribosyl)acetamidine + ATP = 5-amino-1-(5-phospho-beta-D-ribosyl)imidazole + ADP + phosphate + H(+). It participates in purine metabolism; IMP biosynthesis via de novo pathway; 5-amino-1-(5-phospho-D-ribosyl)imidazole from N(2)-formyl-N(1)-(5-phospho-D-ribosyl)glycinamide: step 2/2. This is Phosphoribosylformylglycinamidine cyclo-ligase from Streptococcus sanguinis (strain SK36).